The sequence spans 157 residues: GYLGGYAGYAAAPAAYAAAPAAYAAPAYAAPAVVKTAYAAPAIVKAAAPAVDYYSYPKYAFEYGVNDPHTGDVKRQWEERDGDVVRGEYSLLEPDGTTRTVTYTADAHNGFNAVVHRSGPSAHPAPAPAVAVPAVAKYVAAAPAVVKSVGYGGYGYH.

A run of 6 repeats spans residues 11–14 (AAPA), 18–21 (AAPA), 24–27 (AAPA), 29–32 (AAPA), 39–42 (AAPA), and 47–50 (AAPA). Residues 56–127 (YPKYAFEYGV…SGPSAHPAPA (72 aa)) enclose the Chitin-binding type R&amp;R domain. Repeat unit 7 spans residues 141 to 144 (AAPA).

Component of the cuticle of migratory locust which contains more than 100 different structural proteins. This Locusta migratoria (Migratory locust) protein is Cuticle protein 19.